The following is a 438-amino-acid chain: MKLDKSKQKEINKICVVGLGYIGLPTASMLAIQGYKVIGVDIDEERVKTIRDGKLIINEQGLMTLLTGAITSGNLVVKTEPEEADVYIICVPTPATADKNGKKCDLICVLSAVNNIKPYLKDGDLIIIESTIPPKTTEKIYDDISKNTGKNIYMAYCPERVLPGNILKELVENDRTIGGINKKSAQLAKEIYASFIEGNLYITDSTTAEMVKLMENTFRDVNIALANEFAKVSTELDINVWDAINLANKHPRVNILNPGPGVGGHCISIDPWFIVGSSENAELIKKARNLNDDMPKYVASLIIKEFKEMGICNPKVGIFGITYKGDVEDTRETPARAIIDYLLQNDFEVSIYDPYAKDFEYPLNTIEESIKNSDALIFLTDHSEFKNFEKEDIKEISHMMKNKIVMDMKNTLNHNLWEEQGFNVKLLGDGKSWIVKTL.

Residues Tyr21, Ile22, Asp41, Arg46, Thr93, and Thr131 each contribute to the NAD(+) site. Residues Arg160, Val161, Lys212, Asn216, Arg219, His250, Arg252, and Gly263 each contribute to the UDP-N-acetyl-alpha-D-mannosaminouronate site. Lys212 serves as the catalytic Proton donor/acceptor. Catalysis depends on Cys266, which acts as the Nucleophile. UDP-N-acetyl-alpha-D-mannosaminouronate contacts are provided by Tyr323 and Lys324. Arg331 provides a ligand contact to NAD(+). Residue Lys409 coordinates UDP-N-acetyl-alpha-D-mannosaminouronate.

The protein belongs to the UDP-glucose/GDP-mannose dehydrogenase family. Homotetramer; probably dimer of dimers.

It catalyses the reaction UDP-N-acetyl-alpha-D-mannosamine + 2 NAD(+) + H2O = UDP-N-acetyl-alpha-D-mannosaminouronate + 2 NADH + 3 H(+). In terms of biological role, catalyzes the four-electron oxidation of UDP-N-acetyl-D-mannosamine (UDP-ManNAc), reducing NAD(+) and releasing UDP-N-acetylmannosaminuronic acid (UDP-ManNAcA). The sequence is that of UDP-N-acetyl-D-mannosamine dehydrogenase (wecC) from Methanococcus aeolicus (strain ATCC BAA-1280 / DSM 17508 / OCM 812 / Nankai-3).